The following is a 221-amino-acid chain: Thiamine-phosphate synthase (221 aa).

4-amino-2-methyl-5-(diphosphooxymethyl)pyrimidine is bound by residues Q44–K48 and N80. Mg(2+) is bound by residues D81 and D100. T119 provides a ligand contact to 4-amino-2-methyl-5-(diphosphooxymethyl)pyrimidine. Position 146-148 (T146–T148) interacts with 2-[(2R,5Z)-2-carboxy-4-methylthiazol-5(2H)-ylidene]ethyl phosphate. K149 is a 4-amino-2-methyl-5-(diphosphooxymethyl)pyrimidine binding site. Residue G176 participates in 2-[(2R,5Z)-2-carboxy-4-methylthiazol-5(2H)-ylidene]ethyl phosphate binding.

It belongs to the thiamine-phosphate synthase family. Mg(2+) is required as a cofactor.

It catalyses the reaction 2-[(2R,5Z)-2-carboxy-4-methylthiazol-5(2H)-ylidene]ethyl phosphate + 4-amino-2-methyl-5-(diphosphooxymethyl)pyrimidine + 2 H(+) = thiamine phosphate + CO2 + diphosphate. It carries out the reaction 2-(2-carboxy-4-methylthiazol-5-yl)ethyl phosphate + 4-amino-2-methyl-5-(diphosphooxymethyl)pyrimidine + 2 H(+) = thiamine phosphate + CO2 + diphosphate. The catalysed reaction is 4-methyl-5-(2-phosphooxyethyl)-thiazole + 4-amino-2-methyl-5-(diphosphooxymethyl)pyrimidine + H(+) = thiamine phosphate + diphosphate. It functions in the pathway cofactor biosynthesis; thiamine diphosphate biosynthesis; thiamine phosphate from 4-amino-2-methyl-5-diphosphomethylpyrimidine and 4-methyl-5-(2-phosphoethyl)-thiazole: step 1/1. Its function is as follows. Condenses 4-methyl-5-(beta-hydroxyethyl)thiazole monophosphate (THZ-P) and 2-methyl-4-amino-5-hydroxymethyl pyrimidine pyrophosphate (HMP-PP) to form thiamine monophosphate (TMP). The protein is Thiamine-phosphate synthase of Hyphomonas neptunium (strain ATCC 15444).